Here is a 552-residue protein sequence, read N- to C-terminus: Alpha-galactosidase (552 aa).

Substrate contacts are provided by residues W65, Y191, 220-221 (DD), 325-327 (KID), C368, and R383. The Nucleophile role is filled by D327. The active-site Proton donor/acceptor is D387.

It belongs to the glycosyl hydrolase 36 family. In terms of assembly, homodimer.

The enzyme catalyses Hydrolysis of terminal, non-reducing alpha-D-galactose residues in alpha-D-galactosides, including galactose oligosaccharides, galactomannans and galactolipids.. Inhibited by hydrolysis product alpha-galactopyranose and to a lesser extent by beta-galactopyranose, its mutarotational product. Inhibited by synthetic cyclopropyl carbasugars. Its function is as follows. Hydrolyzes the short-chain alpha-galactosaccharides raffinose, melibiose and stachyose. This chain is Alpha-galactosidase, found in Thermotoga maritima (strain ATCC 43589 / DSM 3109 / JCM 10099 / NBRC 100826 / MSB8).